A 1114-amino-acid chain; its full sequence is Kinesin-like protein KIN-12F (1114 aa).

The interval Met1–Arg84 is disordered. Composition is skewed to polar residues over residues Leu10 to Asp39 and Pro48 to Ala80. Positions His104–Met436 constitute a Kinesin motor domain. Gly175–Thr182 contributes to the ATP binding site. Coiled coils occupy residues Gln761–Asp791, Ala872–Ala942, and Glu1038–Glu1081. The disordered stretch occupies residues Asn1092–Met1114.

Belongs to the TRAFAC class myosin-kinesin ATPase superfamily. Kinesin family. KIN-12 subfamily.

This is Kinesin-like protein KIN-12F from Arabidopsis thaliana (Mouse-ear cress).